A 366-amino-acid polypeptide reads, in one-letter code: Dihydroorotate dehydrogenase (quinone) (366 aa).

Residues 74 to 78 and threonine 98 contribute to the FMN site; that span reads AGFDK. Lysine 78 provides a ligand contact to substrate. 123 to 127 is a substrate binding site; the sequence is NRMGF. 2 residues coordinate FMN: asparagine 156 and asparagine 189. Position 189 (asparagine 189) interacts with substrate. Serine 192 (nucleophile) is an active-site residue. Asparagine 194 contacts substrate. FMN is bound by residues lysine 231 and threonine 259. A substrate-binding site is contributed by 260-261; sequence NT. FMN is bound by residues glycine 285, glycine 314, and 335–336; that span reads YT.

It belongs to the dihydroorotate dehydrogenase family. Type 2 subfamily. As to quaternary structure, monomer. FMN is required as a cofactor.

The protein localises to the cell membrane. It carries out the reaction (S)-dihydroorotate + a quinone = orotate + a quinol. Its pathway is pyrimidine metabolism; UMP biosynthesis via de novo pathway; orotate from (S)-dihydroorotate (quinone route): step 1/1. Catalyzes the conversion of dihydroorotate to orotate with quinone as electron acceptor. The polypeptide is Dihydroorotate dehydrogenase (quinone) (Kineococcus radiotolerans (strain ATCC BAA-149 / DSM 14245 / SRS30216)).